A 637-amino-acid chain; its full sequence is Biosynthetic arginine decarboxylase (637 aa).

Lysine 107 carries the N6-(pyridoxal phosphate)lysine modification. 289-299 (LDVGGGLGVDY) contributes to the substrate binding site.

The protein belongs to the Orn/Lys/Arg decarboxylase class-II family. SpeA subfamily. Requires Mg(2+) as cofactor. Pyridoxal 5'-phosphate serves as cofactor.

It catalyses the reaction L-arginine + H(+) = agmatine + CO2. Functionally, catalyzes the biosynthesis of agmatine from arginine. The polypeptide is Biosynthetic arginine decarboxylase (Thermosynechococcus vestitus (strain NIES-2133 / IAM M-273 / BP-1)).